The chain runs to 148 residues: Prefoldin subunit alpha (148 aa).

Belongs to the prefoldin subunit alpha family. Heterohexamer of two alpha and four beta subunits.

The protein localises to the cytoplasm. Functionally, molecular chaperone capable of stabilizing a range of proteins. Seems to fulfill an ATP-independent, HSP70-like function in archaeal de novo protein folding. The protein is Prefoldin subunit alpha (pfdA) of Pyrococcus horikoshii (strain ATCC 700860 / DSM 12428 / JCM 9974 / NBRC 100139 / OT-3).